We begin with the raw amino-acid sequence, 270 residues long: Orotidine 5'-phosphate decarboxylase (270 aa).

Residues D39, 61 to 63 (KTH), 93 to 102 (DRKFADIGNT), Y221, and R239 each bind substrate. K95 acts as the Proton donor in catalysis.

This sequence belongs to the OMP decarboxylase family.

The catalysed reaction is orotidine 5'-phosphate + H(+) = UMP + CO2. It participates in pyrimidine metabolism; UMP biosynthesis via de novo pathway; UMP from orotate: step 2/2. The sequence is that of Orotidine 5'-phosphate decarboxylase (URA3) from Candida dubliniensis (strain CD36 / ATCC MYA-646 / CBS 7987 / NCPF 3949 / NRRL Y-17841) (Yeast).